Here is an 883-residue protein sequence, read N- to C-terminus: Integrator complex subunit 6 (883 aa).

In terms of domain architecture, VWFA spans 3-227 (ILLFLIDTSA…QCLESLVQKV (225 aa)). An Inhibitory loop motif is present at residues 625 to 632 (MMIDEADE). Residues 666-686 (RRQSPAVNSHIGGKGPPAPMT) form a disordered region. At S800 the chain carries Phosphoserine.

Belongs to the Integrator subunit 6 family. Component of the Integrator complex, composed of core subunits INTS1, INTS2, INTS3, INTS4, INTS5, INTS6, INTS7, INTS8, INTS9/RC74, INTS10, INTS11/CPSF3L, INTS12, INTS13, INTS14 and INTS15. The core complex associates with protein phosphatase 2A subunits PPP2CA and PPP2R1A, to form the Integrator-PP2A (INTAC) complex.

It is found in the nucleus. The protein resides in the chromosome. Its function is as follows. Component of the integrator complex, a multiprotein complex that terminates RNA polymerase II (Pol II) transcription in the promoter-proximal region of genes. The integrator complex provides a quality checkpoint during transcription elongation by driving premature transcription termination of transcripts that are unfavorably configured for transcriptional elongation: the complex terminates transcription by (1) catalyzing dephosphorylation of the C-terminal domain (CTD) of Pol II subunit POLR2A/RPB1 and SUPT5H/SPT5, (2) degrading the exiting nascent RNA transcript via endonuclease activity and (3) promoting the release of Pol II from bound DNA. The integrator complex is also involved in terminating the synthesis of non-coding Pol II transcripts, such as enhancer RNAs (eRNAs), small nuclear RNAs (snRNAs), telomerase RNAs and long non-coding RNAs (lncRNAs). Within the integrator complex, INTS6 acts as a molecular adapter that promotes assembly of protein phosphatase 2A (PP2A) subunits to the integrator core complex, promoting recruitment of PP2A to transcription pause-release checkpoint. Mediates recruitment of cytoplasmic dynein to the nuclear envelope, probably as component of the integrator complex. This chain is Integrator complex subunit 6 (Ints6), found in Mus musculus (Mouse).